The sequence spans 490 residues: JNK-interacting protein 1 (490 aa).

2 disordered regions span residues 1–71 and 213–254; these read MADS…DHEP and EDSS…PVSQ. Over residues 231–249 the composition is skewed to polar residues; it reads GHSTAHSPNDFKSMSPQIT. The SH3 domain maps to 271 to 332; the sequence is MLEATHRGLH…PSAYAVDLDY (62 aa). One can recognise a PID domain in the interval 344 to 479; the sequence is KERYLLGYLG…FQRFYQKFIE (136 aa).

It belongs to the JIP scaffold family. Forms homo- and heterooligomeric complexes. Binds Hep, a dual specificity protein kinase in the JNK pathway, but not its downstream target bsk. The C-terminal region interacts with the kinesin light chain protein, Klc, and the C-terminal PTY motif of amyloid-beta protein precursor-like protein, Appl. Expressed in the brain, CNS, PNS and cells posterior to the morphogenetic furrow in the eye imaginal disk of late embryos.

The protein resides in the cytoplasm. Its function is as follows. The JNK-interacting protein (JIP) group of scaffold proteins selectively mediates JNK signaling by aggregating specific components of the MAPK cascade to form a functional JNK signaling module. May function as a regulator of vesicle transport, through interactions with the JNK-signaling components and motor proteins. The chain is JNK-interacting protein 1 (Aplip1) from Drosophila melanogaster (Fruit fly).